The sequence spans 101 residues: Small ribosomal subunit protein uS14 (101 aa).

Belongs to the universal ribosomal protein uS14 family. As to quaternary structure, part of the 30S ribosomal subunit. Contacts proteins S3 and S10.

Binds 16S rRNA, required for the assembly of 30S particles and may also be responsible for determining the conformation of the 16S rRNA at the A site. In Protochlamydia amoebophila (strain UWE25), this protein is Small ribosomal subunit protein uS14.